We begin with the raw amino-acid sequence, 125 residues long: uncharacterized protein (125 aa).

The N-terminal 46 residues, 1–46 (MFFDTKVLNYPTIHKSISMASTMQRTSSSAASNERQLSQLQRRAPS), are a transit peptide targeting the chloroplast.

Its subcellular location is the plastid. It is found in the chloroplast. This is an uncharacterized protein from Arabidopsis thaliana (Mouse-ear cress).